Here is a 575-residue protein sequence, read N- to C-terminus: Muellerian-inhibiting factor (575 aa).

A signal peptide spans 1-20 (MQGPSLSQLVLVLMGALLEA). The propeptide occupies 21–466 (GTPREEVSST…ERSGPARAQR (446 aa)). Residues asparagine 78 and asparagine 343 are each glycosylated (N-linked (GlcNAc...) asparagine). 3 disulfides stabilise this stretch: cysteine 477–cysteine 541, cysteine 503–cysteine 572, and cysteine 507–cysteine 574.

It belongs to the TGF-beta family. As to quaternary structure, homodimer; disulfide-linked. Preproprotein is proteolytically processed to generate N- and C-terminal cleavage products that homodimerize and associate to form a biologically active non-covalent complex. Binding of the non-covalent complex to AMHR2 induces dissociation of the pro-region from the mature C-terminal dimer. The N-terminal portion of the protein, despite having no intrinsic activity, has the role of amplifying the activity of the C-terminus. In terms of tissue distribution, detected in fetal Sertoli cells. Expressed in granulosa cells of growing follicles but also in theca cells of preovulatory follicles and corpora lutea (at protein level).

It is found in the secreted. In terms of biological role, plays an important role in several reproductive functions. Induces Muellerian duct regression during male fetal sexual differentiation and plays a role in Leydig cell differentiation and function. In female acts as a negative regulator of the primordial to primary follicle transition and decreases FSH sensitivity of growing follicles. AMH signals by binding to a specific type-II receptor, AMHR2, that heterodimerizes with type-I receptors (ACVR1 and BMPR1A), and recruiting SMAD proteins that are translocated to the nucleus to regulate target gene expression. The protein is Muellerian-inhibiting factor (AMH) of Sus scrofa (Pig).